Reading from the N-terminus, the 180-residue chain is Ribulose bisphosphate carboxylase small subunit, chloroplastic 1 (180 aa).

A chloroplast-targeting transit peptide spans 1-56 (MASSVISSAAVATRTNVAQASMVAPFNGLKSAVSFPVSSKQNLDITSIASNGGRVQ).

It belongs to the RuBisCO small chain family. As to quaternary structure, heterohexadecamer of 8 large and 8 small subunits.

The protein localises to the plastid. The protein resides in the chloroplast. RuBisCO catalyzes two reactions: the carboxylation of D-ribulose 1,5-bisphosphate, the primary event in carbon dioxide fixation, as well as the oxidative fragmentation of the pentose substrate. Both reactions occur simultaneously and in competition at the same active site. Although the small subunit is not catalytic it is essential for maximal activity. The polypeptide is Ribulose bisphosphate carboxylase small subunit, chloroplastic 1 (Petunia hybrida (Petunia)).